Consider the following 246-residue polypeptide: Probable transcriptional regulatory protein AHA_1522 (246 aa).

Belongs to the TACO1 family.

Its subcellular location is the cytoplasm. The protein is Probable transcriptional regulatory protein AHA_1522 of Aeromonas hydrophila subsp. hydrophila (strain ATCC 7966 / DSM 30187 / BCRC 13018 / CCUG 14551 / JCM 1027 / KCTC 2358 / NCIMB 9240 / NCTC 8049).